Reading from the N-terminus, the 332-residue chain is Glyceraldehyde-3-phosphate dehydrogenase 3 (332 aa).

3 residues coordinate NAD(+): Arg-11, Ile-12, and Asp-33. Residues Lys-46 and Lys-63 each participate in a glycyl lysine isopeptide (Lys-Gly) (interchain with G-Cter in ubiquitin) cross-link. Position 120 (Thr-120) interacts with NAD(+). Residue 149 to 151 (SCT) coordinates D-glyceraldehyde 3-phosphate. Cys-150 serves as the catalytic Nucleophile. Cys-150 and Cys-154 each carry cysteine persulfide. Lys-160 is covalently cross-linked (Glycyl lysine isopeptide (Lys-Gly) (interchain with G-Cter in URM1)). D-glyceraldehyde 3-phosphate is bound by residues Thr-180, 209–210 (TG), and Arg-232. Ser-302 is modified (phosphoserine). Residue Lys-307 forms a Glycyl lysine isopeptide (Lys-Gly) (interchain with G-Cter in URM1) linkage. NAD(+) contacts are provided by Asn-314 and Tyr-318.

The protein belongs to the glyceraldehyde-3-phosphate dehydrogenase family. Homotetramer. Post-translationally, conjugated to URM1, a ubiquitin-like protein, in response to oxidative stresses. The attachment of URM1 to lysine residues exclusively depends on the presence of a peroxidatic cysteine in the target protein, with low specificity for the particular residue, motif, or structural context at which urmylation can occur. The URM1-conjugation reaction is mechanistically and directly coupled to the process of cysteine persulfidation, transfering the sulfur atom of the URM1 thiocarboxyl group to redox-active cysteine residues in the target protein if it is exposed to oxidative conditions. Persulfidated on specific redox-active cysteine residues. Persulfidation (also called protein S-sulfhydration) may provide a molecular mechanism that enables cells to protect vulnerable cysteine residues from reactive oxygen species (ROS) under stress conditions.

It localises to the cytoplasm. It is found in the mitochondrion. The catalysed reaction is D-glyceraldehyde 3-phosphate + phosphate + NAD(+) = (2R)-3-phospho-glyceroyl phosphate + NADH + H(+). It catalyses the reaction NADH + H2O = (6R)-NADHX. The enzyme catalyses NADH + H2O = (6S)-NADHX. It carries out the reaction NADPH + H2O = (6R)-NADPHX. The catalysed reaction is NADPH + H2O = (6S)-NADPHX. It functions in the pathway carbohydrate degradation; glycolysis; pyruvate from D-glyceraldehyde 3-phosphate: step 1/5. Glyceraldehyde-3-phosphate dehydrogenase (GAPDH) involved in glycolysis and gluconeogenesis. Catalyzes the reaction of glyceraldehyde-3-phosphate to 1,3 bis-phosphoglycerate. The contribution of the TDH1, TDH2, and TDH3 to the total glyceraldehyde-3-phosphate dehydrogenase activity is 10-15, 25-30, and 50-60%, respectively. Its function is as follows. As a side activity, catalyzes the hydration of the nicotinamide ring of NADH or NADPH at the C6 position to give the corresponding hydrates, NADHX and NADPHX, which exist as R and S epimers, that cannot act as electron donors or acceptors and inhibit several dehydrogenases, making them toxic. This chain is Glyceraldehyde-3-phosphate dehydrogenase 3, found in Saccharomyces cerevisiae (strain ATCC 204508 / S288c) (Baker's yeast).